Here is an 874-residue protein sequence, read N- to C-terminus: MKAAEIREKFLKFFESKGHTIVRSSSLVPGNDPTLLFTNSGMVQFKDVFLGAESRPYSRATTAQRSVRAGGKHNDLENVGYTARHHTFFEMLGNFSFGDYFKRDAIHYAWELLTGVYQLPKDKLWVTVYHEDDEAHDIWAKEVGVPVERIIRIGDNKGARYASDNFWQMADTGPCGPCSEIFYDHGPDVWGGPPGSPEEDGDRYIEIWNLVFMQFNRDAQGNMTPLPKQCVDTGMGLERIAAVLQHVHSNYEIDLFQALIKAAARETGVSDLTNNSLKVIADHIRACSFLIVDGVIPGNEGRGYVLRRIVRRAIRHGYKLGKKGSFFHRMVADLVAQMGAAYPELKEAEQRVTDVLRQEEERFFETIEHGMSILEGALAELEAGSSKTLDGELAFKLHDTYGFPLDLTADVCREREVTVDEAAFDEAMTRQREQARAAGKFKMAQGLEYSGEKTTFHGYDEVVFDDAKVIALYVEGASVQQASQGQQAVVVLDHTPFYAESGGQVGDQGVLANASVRFAVSDTLKVQADVVGHHGTLEQGTLKVGDVVKAEIDAVRRARTARNHSATHLMHKALREVLGTHVQQKGSLVDADKTRFDFAHNAPLTDEQIRRVEEIVNAEVLANAPGIVRVMSFDEAVKGGAMALFGEKYGDEVRVLDLGFSRELCGGTHVHRTGDIGLFKIVMEGGVAAGIRRVEAITGDNAVRFVQDLDARINAAAAVLKAQPSELTQRIVQVQDQVKSLEKELSALKSKMASSQGDELAGQAIEVGGVHVLAATLEGADVKTLRETVDKLKDKLKSAAIVLASVEGGKVSLIAGVTADASRKVKAGELVNFVAQQVGGKGGGRPDMAQAGGTEPANLPAALAGVKGWVESQL.

4 residues coordinate Zn(2+): H564, H568, C665, and H669.

The protein belongs to the class-II aminoacyl-tRNA synthetase family. The cofactor is Zn(2+).

It localises to the cytoplasm. The enzyme catalyses tRNA(Ala) + L-alanine + ATP = L-alanyl-tRNA(Ala) + AMP + diphosphate. Its function is as follows. Catalyzes the attachment of alanine to tRNA(Ala) in a two-step reaction: alanine is first activated by ATP to form Ala-AMP and then transferred to the acceptor end of tRNA(Ala). Also edits incorrectly charged Ser-tRNA(Ala) and Gly-tRNA(Ala) via its editing domain. This is Alanine--tRNA ligase from Paraburkholderia xenovorans (strain LB400).